The sequence spans 364 residues: DNA polymerase IV (364 aa).

The UmuC domain maps to 14 to 198 (IIHIDMDAFF…LPIEKFHGVG (185 aa)). D18 and D116 together coordinate Mg(2+). E117 is a catalytic residue.

The protein belongs to the DNA polymerase type-Y family. Monomer. Mg(2+) serves as cofactor.

The protein resides in the cytoplasm. It carries out the reaction DNA(n) + a 2'-deoxyribonucleoside 5'-triphosphate = DNA(n+1) + diphosphate. Poorly processive, error-prone DNA polymerase involved in untargeted mutagenesis. Copies undamaged DNA at stalled replication forks, which arise in vivo from mismatched or misaligned primer ends. These misaligned primers can be extended by PolIV. Exhibits no 3'-5' exonuclease (proofreading) activity. May be involved in translesional synthesis, in conjunction with the beta clamp from PolIII. The chain is DNA polymerase IV from Streptococcus pyogenes serotype M1.